A 323-amino-acid polypeptide reads, in one-letter code: MKLHNVLKNNNNNKEDVGPSIEQFGGNAEWFNTTKVLSECLPYIQQFSGETFVIKYGGAAMTDRKLAESFAHDIVLLKQLGINPIVVHGGGNKINSFLEKINKKSTFINGLRVTDAETLEVVEMVLCGLVNKDITQLINKAGGNAIGLCGKDANLIEAKKVCYTYKENQSNNVEKILDMGFVGEPHEVNTDLLFFIEESDFIPVIAPVCSGENNITYNVNADLVAGALANALAAAKLIILTNVSGVTDANGNLLSEISVSDAENLIEQGVANSGMIPKLQTCIKVVKEGYGSAHIIDGRIPHVLLLELFTVHGTGTMVLGNDI.

Substrate-binding positions include 90–91 (GG), Arg112, and Asn218.

Belongs to the acetylglutamate kinase family. ArgB subfamily.

Its subcellular location is the cytoplasm. The catalysed reaction is N-acetyl-L-glutamate + ATP = N-acetyl-L-glutamyl 5-phosphate + ADP. It participates in amino-acid biosynthesis; L-arginine biosynthesis; N(2)-acetyl-L-ornithine from L-glutamate: step 2/4. Functionally, catalyzes the ATP-dependent phosphorylation of N-acetyl-L-glutamate. This is Acetylglutamate kinase from Ehrlichia canis (strain Jake).